The following is a 170-amino-acid chain: Capsid protein (170 aa).

The span at 1–19 shows a compositional bias: basic residues; that stretch reads MAQLRWGRKGVRSQRRKYS. Residues 1–25 form a disordered region; it reads MAQLRWGRKGVRSQRRKYSRPVAYK.

Belongs to the nanoviridae capsid protein family.

The protein resides in the virion. In Subterranean clover stunt virus (strain J) (SCSV), this protein is Capsid protein (DNA-S).